We begin with the raw amino-acid sequence, 409 residues long: MQEIIGASLVFLCNEKCEVLEDYGVVFDEKIVEIGDYQSLTLKYPHLKAQFFENSVLLPAFINAHTHFEFSNNKASFDYGSFSGWLGSVLNNGGAILENCQGAIQNAISTQLKSGVGSVGAISNHLIEVNLLKESPLNAVVFLEFLGSSYSLEKLKAFEAKFKELKDLEDKKLKAALAVHAPYSVQKDMALSVIQLAKDSQSLLSTHFLESLEELEWVENSKGWFENFYQHFLKESHFKSLYKGANDYIDMFKDTHTLFVHNQFASLEALKRIKSQVKNAFLITCPFSNRLLSGQALDLERTKEAGLSVSVATDGLSSNISLSLLDELRAFLLTHNMPLLELAKIALLGATRHGAKALALNNGEIEANKRADLSVFGFNEKFTKEQAILQFLLHAKEVECLFLGGKRVI.

Zn(2+) contacts are provided by His65, His67, His207, and Asp314.

This sequence belongs to the metallo-dependent hydrolases superfamily. Requires Zn(2+) as cofactor.

It catalyses the reaction adenosine + H2O + H(+) = inosine + NH4(+). In terms of biological role, catalyzes the deamination of adenosine into inosine. Is also able to deaminate adenine, but with considerably less efficiency. Is not active toward 6-chloroadenine. The polypeptide is Adenosine deaminase (Helicobacter pylori (strain ATCC 700392 / 26695) (Campylobacter pylori)).